A 188-amino-acid chain; its full sequence is Adenylate kinase (188 aa).

Position 12 to 17 (12 to 17 (GVGKGT)) interacts with ATP. Positions 32 to 61 (STGDIFRSAMANHTELGDKAKSFMDAGNLV) are NMP. Residues threonine 33, arginine 38, 59 to 61 (NLV), 89 to 92 (GYPR), and glutamine 96 each bind AMP. The interval 130–136 (GRGREDD) is LID. Arginine 131 lines the ATP pocket. Residues arginine 133 and arginine 144 each contribute to the AMP site. Residue glycine 172 coordinates ATP.

The protein belongs to the adenylate kinase family. Monomer.

The protein resides in the cytoplasm. It carries out the reaction AMP + ATP = 2 ADP. The protein operates within purine metabolism; AMP biosynthesis via salvage pathway; AMP from ADP: step 1/1. Its function is as follows. Catalyzes the reversible transfer of the terminal phosphate group between ATP and AMP. Plays an important role in cellular energy homeostasis and in adenine nucleotide metabolism. In Oenococcus oeni (strain ATCC BAA-331 / PSU-1), this protein is Adenylate kinase.